Here is a 37-residue protein sequence, read N- to C-terminus: Bactericidin B-2 (37 aa).

Position 37 is a glycine amide (Gly37).

Belongs to the cecropin family.

The protein resides in the secreted. Its function is as follows. Cecropins have lytic and antibacterial activity against several Gram-positive and Gram-negative bacteria. The chain is Bactericidin B-2 from Manduca sexta (Tobacco hawkmoth).